Here is a 71-residue protein sequence, read N- to C-terminus: Antitoxin VapB26 (71 aa).

Functionally, antitoxin component of a type II toxin-antitoxin (TA) system. Upon expression in M.smegmatis neutralizes the effect of cognate toxin VapC26. This chain is Antitoxin VapB26 (vapB26), found in Mycobacterium tuberculosis (strain ATCC 25618 / H37Rv).